A 391-amino-acid chain; its full sequence is Phosphoglycerate kinase (391 aa).

Substrate contacts are provided by residues 21 to 23 (DLN), Arg-36, 59 to 62 (HLGR), Arg-113, and Arg-146. ATP-binding positions include Lys-197, Glu-319, and 345-348 (GGDT).

This sequence belongs to the phosphoglycerate kinase family. In terms of assembly, monomer.

It localises to the cytoplasm. The catalysed reaction is (2R)-3-phosphoglycerate + ATP = (2R)-3-phospho-glyceroyl phosphate + ADP. It participates in carbohydrate degradation; glycolysis; pyruvate from D-glyceraldehyde 3-phosphate: step 2/5. The protein is Phosphoglycerate kinase of Stenotrophomonas maltophilia (strain R551-3).